Here is a 107-residue protein sequence, read N- to C-terminus: Ig kappa chain V-VI region J539 (107 aa).

Residues 1–23 are framework-1; that stretch reads EIVLTQSPAITAASLGQKVTITC. A disulfide bridge connects residues Cys23 and Cys87. The tract at residues 24-33 is complementarity-determining-1; sequence SASSSVSSLH. A framework-2 region spans residues 34–48; it reads WYQQKSGTSPKPWIY. Positions 49–55 are complementarity-determining-2; the sequence is EISKLAS. The framework-3 stretch occupies residues 56–87; that stretch reads GVPARFSGSGSGTSYSLTINTMEAEDAAIYYC. The complementarity-determining-3 stretch occupies residues 88–96; it reads QQWTYPLIT. Residues 97–106 form a framework-4 region; it reads FGAGTKLELK.

The chain is Ig kappa chain V-VI region J539 from Mus musculus (Mouse).